A 728-amino-acid polypeptide reads, in one-letter code: 1,4-alpha-glucan branching enzyme GlgB (728 aa).

Asp-405 (nucleophile) is an active-site residue. Glu-458 acts as the Proton donor in catalysis.

This sequence belongs to the glycosyl hydrolase 13 family. GlgB subfamily. In terms of assembly, monomer.

It carries out the reaction Transfers a segment of a (1-&gt;4)-alpha-D-glucan chain to a primary hydroxy group in a similar glucan chain.. The protein operates within glycan biosynthesis; glycogen biosynthesis. Its function is as follows. Catalyzes the formation of the alpha-1,6-glucosidic linkages in glycogen by scission of a 1,4-alpha-linked oligosaccharide from growing alpha-1,4-glucan chains and the subsequent attachment of the oligosaccharide to the alpha-1,6 position. The protein is 1,4-alpha-glucan branching enzyme GlgB of Shigella flexneri serotype 5b (strain 8401).